Consider the following 136-residue polypeptide: Acyl carrier protein 1, chloroplastic (136 aa).

The transit peptide at 1 to 52 (MASVTGTSISMASFKASLAPSRVSNLRSVSLPIKGKSFAPLRMRSARFVVCC) directs the protein to the chloroplast. A Carrier domain is found at 56–131 (PETVEKVCAI…DAADLIEKLI (76 aa)). Ser-91 is subject to O-(pantetheine 4'-phosphoryl)serine.

It belongs to the acyl carrier protein (ACP) family. In terms of processing, 4'-phosphopantetheine is transferred from CoA to a specific serine of apo-ACP by acpS. This modification is essential for activity because fatty acids are bound in thioester linkage to the sulfhydryl of the prosthetic group.

The protein resides in the plastid. It is found in the chloroplast. It participates in lipid metabolism; fatty acid biosynthesis. In terms of biological role, carrier of the growing fatty acid chain in fatty acid biosynthesis. The sequence is that of Acyl carrier protein 1, chloroplastic (ACP1) from Casuarina glauca (Swamp oak).